The following is a 36-amino-acid chain: Kappa-theraphotoxin-Pg1b (36 aa).

Intrachain disulfides connect Cys-4/Cys-19, Cys-11/Cys-24, and Cys-18/Cys-31.

This sequence belongs to the neurotoxin 10 (Hwtx-1) family. 44 (Jztx-4) subfamily. Expressed by the venom gland.

The protein localises to the secreted. Functionally, gating modifier of Kv2.1/KCNB1, Kv2.2/KCNB2 and Kv4.3/KCND3 channels. In Chilobrachys guangxiensis (Chinese earth tiger tarantula), this protein is Kappa-theraphotoxin-Pg1b.